The primary structure comprises 230 residues: Pyridoxine/pyridoxamine 5'-phosphate oxidase (230 aa).

Residues 21–24 (RVEY) and K87 each bind substrate. Residues 82 to 87 (RSVLCK), 97 to 98 (YT), K104, and Q126 contribute to the FMN site. The substrate site is built by Y144, R148, and S152. Residues 161-162 (QS) and W207 contribute to the FMN site. 213 to 215 (RVH) is a binding site for substrate. Position 217 (R217) interacts with FMN.

The protein belongs to the pyridoxamine 5'-phosphate oxidase family. In terms of assembly, homodimer. FMN is required as a cofactor.

The enzyme catalyses pyridoxamine 5'-phosphate + O2 + H2O = pyridoxal 5'-phosphate + H2O2 + NH4(+). It carries out the reaction pyridoxine 5'-phosphate + O2 = pyridoxal 5'-phosphate + H2O2. It participates in cofactor metabolism; pyridoxal 5'-phosphate salvage; pyridoxal 5'-phosphate from pyridoxamine 5'-phosphate: step 1/1. Its pathway is cofactor metabolism; pyridoxal 5'-phosphate salvage; pyridoxal 5'-phosphate from pyridoxine 5'-phosphate: step 1/1. Functionally, catalyzes the oxidation of either pyridoxine 5'-phosphate (PNP) or pyridoxamine 5'-phosphate (PMP) into pyridoxal 5'-phosphate (PLP). The polypeptide is Pyridoxine/pyridoxamine 5'-phosphate oxidase (Mycolicibacterium smegmatis (strain ATCC 700084 / mc(2)155) (Mycobacterium smegmatis)).